The following is a 513-amino-acid chain: Glutamate--tRNA ligase 2 (513 aa).

Residues 11 to 21 (PSPSGFLHIGS) carry the 'HIGH' region motif. Positions 240–244 (KLSKR) match the 'KMSKS' region motif. Lys243 provides a ligand contact to ATP.

This sequence belongs to the class-I aminoacyl-tRNA synthetase family. Glutamate--tRNA ligase type 1 subfamily. Monomer.

It is found in the cytoplasm. It carries out the reaction tRNA(Glu) + L-glutamate + ATP = L-glutamyl-tRNA(Glu) + AMP + diphosphate. In terms of biological role, catalyzes the attachment of glutamate to tRNA(Glu) in a two-step reaction: glutamate is first activated by ATP to form Glu-AMP and then transferred to the acceptor end of tRNA(Glu). The polypeptide is Glutamate--tRNA ligase 2 (Rickettsia massiliae (strain Mtu5)).